The sequence spans 446 residues: Peptide chain release factor 1, mitochondrial (446 aa).

The transit peptide at 1–62 directs the protein to the mitochondrion; sequence MSHHLCIWLF…LLNKSWSRGC (62 aa). A GGQ domain region spans residues 298-362; that stretch reads PKDLRVDTFR…LRARLYQQII (65 aa). Positions 312 to 314 match the GGQ motif; the sequence is GGQ. Gln-314 carries the N5-methylglutamine modification.

It belongs to the prokaryotic/mitochondrial release factor family. Methylation of glutamine in the GGQ triplet by HEMK1 is conserved from bacteria to mammals.

Its subcellular location is the mitochondrion. Its function is as follows. Mitochondrial peptide chain release factor that directs the termination of translation in response to the peptide chain non-canonical stop codons AGG and AGA. Non-canonical termination codons AGG and AGA are found at the end of MT-CO1/COX1 and MT-ND6/ND6 open reading frames, respectively. Recognizes non-canonical stop codons via a network of interactions between the codon, MTRF1 and the ribosomal RNA (rRNA): in contrast to other translation release factors, which identify the codon in the A-site via direct interactions of amino acid side chains with the bases, MTRF1 repositions the first 2 bases of the stop codon to use an intricate network of interactions that includes residues of the release factor, the rRNA of the small ribosomal subunit, as well as neighboring bases of the mRNA. This chain is Peptide chain release factor 1, mitochondrial, found in Mus musculus (Mouse).